The primary structure comprises 569 residues: Membrane protein insertase YidC (569 aa).

8 helical membrane-spanning segments follow: residues 7–24 (VLWV…DNYN), 219–239 (GSAL…PAIY), 299–319 (LYAV…TASM), 340–360 (FELV…FWLM), 366–386 (ILGN…LAFF), 436–456 (IGGC…YWVL), 485–505 (IGTF…SMFI), and 526–546 (PIAF…YWVV).

The protein belongs to the OXA1/ALB3/YidC family. Type 1 subfamily. In terms of assembly, interacts with the Sec translocase complex via SecD. Specifically interacts with transmembrane segments of nascent integral membrane proteins during membrane integration.

It is found in the cell inner membrane. Its function is as follows. Required for the insertion and/or proper folding and/or complex formation of integral membrane proteins into the membrane. Involved in integration of membrane proteins that insert both dependently and independently of the Sec translocase complex, as well as at least some lipoproteins. Aids folding of multispanning membrane proteins. This is Membrane protein insertase YidC from Herminiimonas arsenicoxydans.